The chain runs to 149 residues: MKKATLVIGVIGADCHAVGNKVLDRVFSNHDFRVINLGVMVSQDEYIDAAIETGADAIVVSSIYGHGDIDCLGMRERCIERGLGDILLYVGGNLVVGKHDFADVETKFKEMGFDRVFAPSHDLEDVCQLMAHDINQRHDVDTRILEEAI.

Positions 3–140 (KATLVIGVIG…AHDINQRHDV (138 aa)) constitute a B12-binding domain. Residues 13–17 (ADCHA), histidine 16, 61–63 (SSI), and 93–97 (NLVVG) contribute to the adenosylcob(III)alamin site.

This sequence belongs to the methylaspartate mutase GlmS subunit family. In terms of assembly, heterotetramer composed of 2 epsilon subunits (GlmE) and 2 sigma subunits (GlmS). GlmE exists as a homodimer and GlmS as a monomer. The cofactor is adenosylcob(III)alamin.

It catalyses the reaction (2S,3S)-3-methyl-L-aspartate = L-glutamate. It participates in amino-acid degradation; L-glutamate degradation via mesaconate pathway; acetate and pyruvate from L-glutamate: step 1/4. Its function is as follows. Catalyzes the carbon skeleton rearrangement of L-glutamate to L-threo-3-methylaspartate ((2S,3S)-3-methylaspartate). The chain is Glutamate mutase sigma subunit from Escherichia coli O157:H7.